The following is a 315-amino-acid chain: Protoheme IX farnesyltransferase (315 aa).

A run of 9 helical transmembrane segments spans residues V34–N54, P55–I75, A105–N125, L127–L147, I155–G175, L177–W197, W226–H246, L251–L271, and Y294–M314.

It belongs to the UbiA prenyltransferase family. Protoheme IX farnesyltransferase subfamily.

The protein resides in the cell inner membrane. The catalysed reaction is heme b + (2E,6E)-farnesyl diphosphate + H2O = Fe(II)-heme o + diphosphate. The protein operates within porphyrin-containing compound metabolism; heme O biosynthesis; heme O from protoheme: step 1/1. Functionally, converts heme B (protoheme IX) to heme O by substitution of the vinyl group on carbon 2 of heme B porphyrin ring with a hydroxyethyl farnesyl side group. This chain is Protoheme IX farnesyltransferase, found in Gluconacetobacter diazotrophicus (strain ATCC 49037 / DSM 5601 / CCUG 37298 / CIP 103539 / LMG 7603 / PAl5).